The chain runs to 310 residues: p-hydroxybenzoic acid efflux pump subunit AaeA (310 aa).

Residues 12 to 32 (AITLVLVILAFIAIFRAWVYY) traverse the membrane as a helical segment.

This sequence belongs to the membrane fusion protein (MFP) (TC 8.A.1) family.

The protein localises to the cell inner membrane. Its function is as follows. Forms an efflux pump with AaeB. This is p-hydroxybenzoic acid efflux pump subunit AaeA from Citrobacter koseri (strain ATCC BAA-895 / CDC 4225-83 / SGSC4696).